We begin with the raw amino-acid sequence, 267 residues long: 4-hydroxy-tetrahydrodipicolinate reductase (267 aa).

NAD(+) is bound by residues 9–14 (GAGGRM) and Asp-35. Residue Arg-36 coordinates NADP(+). NAD(+) contacts are provided by residues 99 to 101 (GTT) and 123 to 126 (AANY). The active-site Proton donor/acceptor is the His-156. A (S)-2,3,4,5-tetrahydrodipicolinate-binding site is contributed by His-157. Lys-160 (proton donor) is an active-site residue. (S)-2,3,4,5-tetrahydrodipicolinate is bound at residue 166 to 167 (GT).

It belongs to the DapB family.

It localises to the cytoplasm. The enzyme catalyses (S)-2,3,4,5-tetrahydrodipicolinate + NAD(+) + H2O = (2S,4S)-4-hydroxy-2,3,4,5-tetrahydrodipicolinate + NADH + H(+). The catalysed reaction is (S)-2,3,4,5-tetrahydrodipicolinate + NADP(+) + H2O = (2S,4S)-4-hydroxy-2,3,4,5-tetrahydrodipicolinate + NADPH + H(+). It functions in the pathway amino-acid biosynthesis; L-lysine biosynthesis via DAP pathway; (S)-tetrahydrodipicolinate from L-aspartate: step 4/4. Catalyzes the conversion of 4-hydroxy-tetrahydrodipicolinate (HTPA) to tetrahydrodipicolinate. The sequence is that of 4-hydroxy-tetrahydrodipicolinate reductase from Halorhodospira halophila (strain DSM 244 / SL1) (Ectothiorhodospira halophila (strain DSM 244 / SL1)).